The chain runs to 103 residues: Large ribosomal subunit protein bL21 (103 aa).

This sequence belongs to the bacterial ribosomal protein bL21 family. As to quaternary structure, part of the 50S ribosomal subunit. Contacts protein L20.

In terms of biological role, this protein binds to 23S rRNA in the presence of protein L20. In Shewanella baltica (strain OS223), this protein is Large ribosomal subunit protein bL21.